The sequence spans 137 residues: uncharacterized protein (137 aa).

Transmembrane regions (helical) follow at residues 26–42 (CSLC…FFAM) and 52–69 (ASIP…GSIL).

The protein localises to the membrane. This is an uncharacterized protein from Saccharomyces cerevisiae (strain ATCC 204508 / S288c) (Baker's yeast).